We begin with the raw amino-acid sequence, 305 residues long: NADH-cytochrome b5 reductase 1 (305 aa).

The helical transmembrane segment at 8–28 threads the bilayer; it reads VLLASLGVGLFTLFGLALGTY. One can recognise an FAD-binding FR-type domain in the interval 44–156; the sequence is DEKYLLRLLD…RGPSGLLSYA (113 aa). Residues 136–166 and 175–210 each bind FAD; these read DSLKIGDVVEFRGPSGLLSYAGKGNFNIQPN and VAKKLGMIAGGTGITPMLQLIRAILKVPEDPTQCFL.

It belongs to the flavoprotein pyridine nucleotide cytochrome reductase family. FAD serves as cofactor.

The protein localises to the membrane. The enzyme catalyses 2 Fe(III)-[cytochrome b5] + NADH = 2 Fe(II)-[cytochrome b5] + NAD(+) + H(+). In terms of biological role, NADH-cytochrome b5 reductases are involved in desaturation and elongation of fatty acids, cholesterol biosynthesis, drug metabolism, and, in erythrocyte, methemoglobin reduction. The chain is NADH-cytochrome b5 reductase 1 (Cyb5r1) from Rattus norvegicus (Rat).